Reading from the N-terminus, the 656-residue chain is Chaperone protein DnaK (656 aa).

T204 bears the Phosphothreonine; by autocatalysis mark. The tract at residues 607–656 (VYAKKGGAAGAPPGGEAEGEPQAQAGGKKEDVVDAEFEEVKDEKKKDEDK) is disordered. Over residues 620–632 (GGEAEGEPQAQAG) the composition is skewed to low complexity. The span at 647 to 656 (KDEKKKDEDK) shows a compositional bias: basic and acidic residues.

The protein belongs to the heat shock protein 70 family.

Acts as a chaperone. This chain is Chaperone protein DnaK, found in Coxiella burnetii (strain CbuK_Q154) (Coxiella burnetii (strain Q154)).